The sequence spans 346 residues: UDP-3-O-acylglucosamine N-acyltransferase (346 aa).

His240 functions as the Proton acceptor in the catalytic mechanism.

This sequence belongs to the transferase hexapeptide repeat family. LpxD subfamily. Homotrimer.

The catalysed reaction is a UDP-3-O-[(3R)-3-hydroxyacyl]-alpha-D-glucosamine + a (3R)-hydroxyacyl-[ACP] = a UDP-2-N,3-O-bis[(3R)-3-hydroxyacyl]-alpha-D-glucosamine + holo-[ACP] + H(+). It functions in the pathway bacterial outer membrane biogenesis; LPS lipid A biosynthesis. Its function is as follows. Catalyzes the N-acylation of UDP-3-O-acylglucosamine using 3-hydroxyacyl-ACP as the acyl donor. Is involved in the biosynthesis of lipid A, a phosphorylated glycolipid that anchors the lipopolysaccharide to the outer membrane of the cell. The chain is UDP-3-O-acylglucosamine N-acyltransferase from Phocaeicola vulgatus (strain ATCC 8482 / DSM 1447 / JCM 5826 / CCUG 4940 / NBRC 14291 / NCTC 11154) (Bacteroides vulgatus).